Consider the following 993-residue polypeptide: Protein translocase subunit SecA (993 aa).

ATP-binding positions include Gln-102, 120–124 (GEGKT), and Asp-523. The interval 910–962 (ENAPEPQISGGNGQQPPQRRQQTSLDDLEKQFERKKKRELEQARMAGGGMPDA) is disordered. Basic and acidic residues predominate over residues 936–951 (DLEKQFERKKKRELEQ). Residues Cys-979, Cys-981, Cys-990, and His-991 each contribute to the Zn(2+) site.

It belongs to the SecA family. In terms of assembly, monomer and homodimer. Part of the essential Sec protein translocation apparatus which comprises SecA, SecYEG and auxiliary proteins SecDF. Other proteins may also be involved. The cofactor is Zn(2+).

It localises to the cell inner membrane. It is found in the cytoplasm. It catalyses the reaction ATP + H2O + cellular proteinSide 1 = ADP + phosphate + cellular proteinSide 2.. Functionally, part of the Sec protein translocase complex. Interacts with the SecYEG preprotein conducting channel. Has a central role in coupling the hydrolysis of ATP to the transfer of proteins into and across the cell membrane, serving as an ATP-driven molecular motor driving the stepwise translocation of polypeptide chains across the membrane. This Koribacter versatilis (strain Ellin345) protein is Protein translocase subunit SecA.